Consider the following 274-residue polypeptide: Elongation factor Ts (274 aa).

Residues 79 to 82 (TDFV) are involved in Mg(2+) ion dislocation from EF-Tu.

The protein belongs to the EF-Ts family.

The protein resides in the cytoplasm. In terms of biological role, associates with the EF-Tu.GDP complex and induces the exchange of GDP to GTP. It remains bound to the aminoacyl-tRNA.EF-Tu.GTP complex up to the GTP hydrolysis stage on the ribosome. The protein is Elongation factor Ts of Azobacteroides pseudotrichonymphae genomovar. CFP2.